An 83-amino-acid polypeptide reads, in one-letter code: Kunitz-type serine protease inhibitor tigerin-3 (83 aa).

Residues 1–24 form the signal peptide; it reads MSSGGLLLLLGLLTLWEILTPVSS. The BPTI/Kunitz inhibitor domain maps to 31–81; the sequence is CHLPHDTGPCNRNTQAFYYNPVYHTCLKFIYGGCQGNSNNFKTIDECKRTC. 3 cysteine pairs are disulfide-bonded: Cys31–Cys81, Cys40–Cys64, and Cys56–Cys77.

It belongs to the venom Kunitz-type family. Expressed by the venom gland.

It localises to the secreted. In terms of biological role, serine protease inhibitor. This is Kunitz-type serine protease inhibitor tigerin-3 from Notechis scutatus scutatus (Mainland tiger snake).